A 467-amino-acid chain; its full sequence is UDP-N-acetylmuramate--L-alanine ligase (467 aa).

Residue 121-127 (GSHGKTT) participates in ATP binding.

This sequence belongs to the MurCDEF family.

It is found in the cytoplasm. The catalysed reaction is UDP-N-acetyl-alpha-D-muramate + L-alanine + ATP = UDP-N-acetyl-alpha-D-muramoyl-L-alanine + ADP + phosphate + H(+). The protein operates within cell wall biogenesis; peptidoglycan biosynthesis. In terms of biological role, cell wall formation. This is UDP-N-acetylmuramate--L-alanine ligase from Parasynechococcus marenigrum (strain WH8102).